Reading from the N-terminus, the 100-residue chain is Large ribosomal subunit protein uL23 (100 aa).

This sequence belongs to the universal ribosomal protein uL23 family. As to quaternary structure, part of the 50S ribosomal subunit. Contacts protein L29, and trigger factor when it is bound to the ribosome.

In terms of biological role, one of the early assembly proteins it binds 23S rRNA. One of the proteins that surrounds the polypeptide exit tunnel on the outside of the ribosome. Forms the main docking site for trigger factor binding to the ribosome. In Kosmotoga olearia (strain ATCC BAA-1733 / DSM 21960 / TBF 19.5.1), this protein is Large ribosomal subunit protein uL23.